Reading from the N-terminus, the 576-residue chain is Protein HYPER-SENSITIVITY-RELATED 4 (576 aa).

A helical transmembrane segment spans residues 55 to 75 (LATAKTVLTTAASVAATAMLA). 306-313 (GPPGTGKS) serves as a coordination point for ATP. Residues 508 to 532 (DKAKTEKQELENKKKTKEGTDSVVK) are disordered.

This sequence belongs to the AAA ATPase family. BCS1 subfamily. As to quaternary structure, binds to the Yariv phenylglycoside (beta-D-Glc)(3). Mg(2+) is required as a cofactor.

It is found in the membrane. The enzyme catalyses ATP + H2O = ADP + phosphate + H(+). The polypeptide is Protein HYPER-SENSITIVITY-RELATED 4 (Arabidopsis thaliana (Mouse-ear cress)).